The primary structure comprises 374 residues: Histidinol-phosphate aminotransferase 2 (374 aa).

N6-(pyridoxal phosphate)lysine is present on lysine 227.

This sequence belongs to the class-II pyridoxal-phosphate-dependent aminotransferase family. Histidinol-phosphate aminotransferase subfamily. As to quaternary structure, homodimer. The cofactor is pyridoxal 5'-phosphate.

The enzyme catalyses L-histidinol phosphate + 2-oxoglutarate = 3-(imidazol-4-yl)-2-oxopropyl phosphate + L-glutamate. It functions in the pathway amino-acid biosynthesis; L-histidine biosynthesis; L-histidine from 5-phospho-alpha-D-ribose 1-diphosphate: step 7/9. The sequence is that of Histidinol-phosphate aminotransferase 2 (hisC2) from Ralstonia nicotianae (strain ATCC BAA-1114 / GMI1000) (Ralstonia solanacearum).